Consider the following 179-residue polypeptide: Signal peptidase complex catalytic subunit SEC11A (179 aa).

Residues 1–16 (MLSLDFLDDVRRMNKR) lie on the Cytoplasmic side of the membrane. The chain crosses the membrane as a helical; Signal-anchor for type II membrane protein span at residues 17–36 (QLYYQVLNFGMIVSSALMIW). The Lumenal portion of the chain corresponds to 37–179 (KGLMLITGSE…LGLFVLVHRE (143 aa)). Residues Ser56, His96, and Asp122 each act as charge relay system in the active site. The C-terminal short (CTS) helix stretch occupies residues 165–176 (AVLFLLGLFVLV).

The protein belongs to the peptidase S26B family. As to quaternary structure, component of the signal peptidase complex paralog A (SPC-A) composed of a catalytic subunit SEC11A and three accessory subunits SPCS1, SPCS2 and SPCS3. Within the complex, interacts with SPCS2 and SPCS3. The complex induces a local thinning of the ER membrane which is used to measure the length of the signal peptide (SP) h-region of protein substrates. This ensures the selectivity of the complex towards h-regions shorter than 18-20 amino acids.

It is found in the endoplasmic reticulum membrane. The enzyme catalyses Cleavage of hydrophobic, N-terminal signal or leader sequences from secreted and periplasmic proteins.. Catalytic component of the signal peptidase complex (SPC) which catalyzes the cleavage of N-terminal signal sequences from nascent proteins as they are translocated into the lumen of the endoplasmic reticulum. Specifically cleaves N-terminal signal peptides that contain a hydrophobic alpha-helix (h-region) shorter than 18-20 amino acids. This is Signal peptidase complex catalytic subunit SEC11A (Sec11a) from Rattus norvegicus (Rat).